The primary structure comprises 101 residues: Biogenesis of lysosome-related organelles complex 1 subunit SNN1 (101 aa).

Positions 62-100 form a coiled coil; the sequence is DSNEYKAQFKEVNNLQKRLQKITLRLKDLERRSSQLTTS.

The protein belongs to the SNAPIN family. As to quaternary structure, component of the biogenesis of lysosome-related organelles complex-1 (BLOC-1).

It is found in the endosome. Functionally, component of the biogenesis of lysosome-related organelles complex-1 (BLOC-1), a complex involved in endosomal cargo sorting. The polypeptide is Biogenesis of lysosome-related organelles complex 1 subunit SNN1 (SNN1) (Candida glabrata (strain ATCC 2001 / BCRC 20586 / JCM 3761 / NBRC 0622 / NRRL Y-65 / CBS 138) (Yeast)).